The primary structure comprises 179 residues: Large ribosomal subunit protein uL5c (179 aa).

Belongs to the universal ribosomal protein uL5 family. Part of the 50S ribosomal subunit; contacts the 5S rRNA.

Its subcellular location is the plastid. The protein resides in the chloroplast. Its function is as follows. Binds 5S rRNA, forms part of the central protuberance of the 50S subunit. In Euglena gracilis, this protein is Large ribosomal subunit protein uL5c (rpl5).